The sequence spans 238 residues: MTPHINAPAGAFADVVLMPGDPLRAKYIAETFLENAQEVTNVRNMLGYTGTYKGRKISVMGHGMGIPSCSIYAKELITEYGVKKIIRVGSCGAVNMDVKIRDVIIGLGACTDSKVNRIRFKDNDFAAIADFGMARAAVQAAKNKGIDVKVGNLFSADLFYTPDLEMFDVMEKYGILGVEMEAAGIYGVAAEFKAKALTICTVSDHIRTHEQTSAEERQLTFNEMIEIALESVLLEDSL.

His-4 serves as a coordination point for a purine D-ribonucleoside. Residues Gly-20, Arg-24, Arg-43, and 87-90 (RVGS) each bind phosphate. A purine D-ribonucleoside-binding positions include 179–181 (EME) and 203–204 (SD). Residue Asp-204 is the Proton donor of the active site.

Belongs to the PNP/UDP phosphorylase family. Homohexamer; trimer of homodimers.

The enzyme catalyses a purine D-ribonucleoside + phosphate = a purine nucleobase + alpha-D-ribose 1-phosphate. It catalyses the reaction a purine 2'-deoxy-D-ribonucleoside + phosphate = a purine nucleobase + 2-deoxy-alpha-D-ribose 1-phosphate. Functionally, catalyzes the reversible phosphorolytic breakdown of the N-glycosidic bond in the beta-(deoxy)ribonucleoside molecules, with the formation of the corresponding free purine bases and pentose-1-phosphate. This is Purine nucleoside phosphorylase DeoD-type from Histophilus somni (strain 2336) (Haemophilus somnus).